The following is a 678-amino-acid chain: uncharacterized protein (678 aa).

Disordered regions lie at residues 123–156 (TPLS…TDSV) and 381–417 (TETT…TEHS).

The protein resides in the cytoplasm. This is an uncharacterized protein from Schizosaccharomyces pombe (strain 972 / ATCC 24843) (Fission yeast).